We begin with the raw amino-acid sequence, 445 residues long: MMWYNLTIKQLKNVRNFMIQKPKGTSDFFLEKADLFQYILDTFRKEAELFNYSYIQTPILEFYDLFYRSVGETTDVVSKEMFIFNDRSERKMALRPEKTAGVIRSLVENKLIFNAENKFYYYGSMFRYERPQKGRYREFTQIGCEWIEDNSDFSDFEILLFASKFLGNFNFNKVILKINNLGNKVERENYLIELKKYFYKFKDKFDEISLKRLEKNPLRILDDKEINHQDFIKNAPKLFDFLNSETVQKFNNLQNYLRKSNISFEIDYSLVRGFDYYNNLVFEFVYYDEESRSELTILGGGRYSNLIEELGGPKKDAIGFAAGVERLMILLKEKEWEKPIKTSIFVFNKDHEDLYKNFDFVYKLRKRDLVVKQNVSNFKLQKIYSKIVNEGIKFLIFFDEKLNQIIIKNLINKNFLDLTNKSQEEKINLVKKFIESENKNENNSK.

The protein belongs to the class-II aminoacyl-tRNA synthetase family. Homodimer.

It is found in the cytoplasm. It catalyses the reaction tRNA(His) + L-histidine + ATP = L-histidyl-tRNA(His) + AMP + diphosphate + H(+). The protein is Histidine--tRNA ligase of Mycoplasma mobile (strain ATCC 43663 / 163K / NCTC 11711) (Mesomycoplasma mobile).